The following is a 962-amino-acid chain: pH-response regulator protein palF/prr-3 (962 aa).

Disordered stretches follow at residues Met1–Thr43, Ala225–Ser326, Thr568–Asn675, and Arg689–Arg962. The segment covering Ile237–Pro246 has biased composition (basic residues). 3 stretches are compositionally biased toward polar residues: residues Gly297–His307, Ser314–Ser326, and Pro581–Val596. 2 stretches are compositionally biased toward low complexity: residues Pro696–Ser722 and Pro738–Ala747. A compositionally biased stretch (basic and acidic residues) spans Thr793–Leu805. Low complexity predominate over residues Ala830–Pro839. Residues Ser840 to Ala849 show a composition bias toward pro residues. Residues Pro913–Ser928 show a composition bias toward low complexity. Polar residues predominate over residues Gly929–Ser949.

Belongs to the arrestin family. PalF/RIM8 subfamily.

Its function is as follows. Required for the proteolytic cleavage of the transcription factor pacc-1 in response to alkaline ambient pH. The chain is pH-response regulator protein palF/prr-3 (prr-3) from Neurospora crassa (strain ATCC 24698 / 74-OR23-1A / CBS 708.71 / DSM 1257 / FGSC 987).